We begin with the raw amino-acid sequence, 259 residues long: TCF3 fusion partner homolog (259 aa).

2 disordered regions span residues 51 to 72 (GLGD…GRRR) and 141 to 210 (EDDG…APVQ). S167 carries the post-translational modification Phosphoserine. Phosphothreonine is present on T172. Phosphoserine is present on residues S180 and S188. A Phosphothreonine modification is found at T203. Residue K222 forms a Glycyl lysine isopeptide (Lys-Gly) (interchain with G-Cter in SUMO2) linkage. The interval 240 to 259 (VSRGPDKLLPYPTLASPPFD) is disordered. S255 carries the phosphoserine modification.

In terms of assembly, interacts with NOL3; translocates NOL3 into the nucleus and negatively regulated TFPT-induced cell death. Component of the chromatin remodeling INO80 complex; specifically part of a complex module associated with the N-terminus of INO80. As to expression, ubiquitously expressed. Abundant in the brain.

Its subcellular location is the nucleus. Functionally, appears to promote apoptosis in a p53/TP53-independent manner. In terms of biological role, putative regulatory component of the chromatin remodeling INO80 complex which is involved in transcriptional regulation, DNA replication and probably DNA repair. This is TCF3 fusion partner homolog (Tfpt) from Rattus norvegicus (Rat).